Consider the following 458-residue polypeptide: NADH-quinone oxidoreductase subunit N (458 aa).

The next 14 helical transmembrane spans lie at 4-24 (LLPEITLTLIALLGQFFAVII), 30-50 (IISNIIILLCILSIFLTFKYS), 62-82 (GINIGISKSIVLLFTIISMII), 94-114 (LKFEFITLILLSVVGIFVAIS), 118-138 (FLLLFCGMELTALTSYALAGF), 153-173 (FILGSLVSCLSLFGISFIYGF), 194-214 (LGLIIGIVLFLSSIFFKLSSV), 235-255 (FTAASKIGMVIVLLNISKLII), 261-281 (INYNLIKIIAILSMLFGAFGA), 290-310 (LMAYSTILNIGYVLIGVLLHN), 318-338 (LLYILIYAVGSIGFFTCLIML), 361-381 (IAAIISIVMFSMIGIPPLTGF), 397-417 (FILAYCGIFTSVVAAFYYLKV), and 438-458 (LLLINYLVVGFLLLGSFIISF).

This sequence belongs to the complex I subunit 2 family. In terms of assembly, NDH-1 is composed of 14 different subunits. Subunits NuoA, H, J, K, L, M, N constitute the membrane sector of the complex.

The protein localises to the cell inner membrane. It carries out the reaction a quinone + NADH + 5 H(+)(in) = a quinol + NAD(+) + 4 H(+)(out). NDH-1 shuttles electrons from NADH, via FMN and iron-sulfur (Fe-S) centers, to quinones in the respiratory chain. The immediate electron acceptor for the enzyme in this species is believed to be ubiquinone. Couples the redox reaction to proton translocation (for every two electrons transferred, four hydrogen ions are translocated across the cytoplasmic membrane), and thus conserves the redox energy in a proton gradient. The sequence is that of NADH-quinone oxidoreductase subunit N from Rickettsia felis (strain ATCC VR-1525 / URRWXCal2) (Rickettsia azadi).